A 194-amino-acid polypeptide reads, in one-letter code: Protein GrpE (194 aa).

Residues 1-12 (MNKQKNNRERTP) are compositionally biased toward basic and acidic residues. The segment at 1-44 (MNKQKNNRERTPQPEQDTERDEQLTNSHENDIDSAPAAEENDKV) is disordered.

Belongs to the GrpE family. As to quaternary structure, homodimer.

The protein resides in the cytoplasm. Functionally, participates actively in the response to hyperosmotic and heat shock by preventing the aggregation of stress-denatured proteins, in association with DnaK and GrpE. It is the nucleotide exchange factor for DnaK and may function as a thermosensor. Unfolded proteins bind initially to DnaJ; upon interaction with the DnaJ-bound protein, DnaK hydrolyzes its bound ATP, resulting in the formation of a stable complex. GrpE releases ADP from DnaK; ATP binding to DnaK triggers the release of the substrate protein, thus completing the reaction cycle. Several rounds of ATP-dependent interactions between DnaJ, DnaK and GrpE are required for fully efficient folding. In Porphyromonas gingivalis (strain ATCC BAA-308 / W83), this protein is Protein GrpE.